Here is a 447-residue protein sequence, read N- to C-terminus: GTPase Der (447 aa).

EngA-type G domains are found at residues 4–165 (QIIA…PKEK) and 180–357 (VQIV…KNWN). GTP is bound by residues 10-17 (GRPNVGKS), 57-61 (DTPGL), 119-122 (NKCE), 186-193 (GRPNAGKS), 233-237 (DTAGL), and 298-301 (NKWD). The KH-like domain maps to 358–443 (KKITTSKLNE…PIRFAYVKTK (86 aa)).

This sequence belongs to the TRAFAC class TrmE-Era-EngA-EngB-Septin-like GTPase superfamily. EngA (Der) GTPase family. As to quaternary structure, associates with the 50S ribosomal subunit.

Its function is as follows. GTPase that plays an essential role in the late steps of ribosome biogenesis. This chain is GTPase Der, found in Rickettsia canadensis (strain McKiel).